The chain runs to 1236 residues: DNA-directed RNA polymerase subunit beta (1236 aa).

The segment at 1185-1236 is disordered; that stretch reads IEGSEDYTEPKQPNDNYLEEEENKDKESDYDEDLNFDDLTKGLQLDDFNDEH. A compositionally biased stretch (acidic residues) spans 1201–1220; that stretch reads YLEEEENKDKESDYDEDLNF.

This sequence belongs to the RNA polymerase beta chain family. The RNAP catalytic core consists of 2 alpha, 1 beta, 1 beta' and 1 omega subunit. When a sigma factor is associated with the core the holoenzyme is formed, which can initiate transcription.

The enzyme catalyses RNA(n) + a ribonucleoside 5'-triphosphate = RNA(n+1) + diphosphate. Functionally, DNA-dependent RNA polymerase catalyzes the transcription of DNA into RNA using the four ribonucleoside triphosphates as substrates. The sequence is that of DNA-directed RNA polymerase subunit beta from Clostridium tetani (strain Massachusetts / E88).